The following is a 395-amino-acid chain: S-adenosylmethionine synthase (395 aa).

His-14 is a binding site for ATP. Asp-16 contributes to the Mg(2+) binding site. Glu-42 contributes to the K(+) binding site. L-methionine is bound by residues Glu-55 and Gln-98. Residues 98–108 are flexible loop; sequence QSPDIALGVDK. ATP contacts are provided by residues 174–176, 240–241, Asp-249, 255–256, Ala-272, and Lys-276; these read DGK, RF, and RK. Asp-249 lines the L-methionine pocket. Lys-280 serves as a coordination point for L-methionine.

It belongs to the AdoMet synthase family. In terms of assembly, homotetramer; dimer of dimers. Requires Mg(2+) as cofactor. K(+) is required as a cofactor.

Its subcellular location is the cytoplasm. It catalyses the reaction L-methionine + ATP + H2O = S-adenosyl-L-methionine + phosphate + diphosphate. It functions in the pathway amino-acid biosynthesis; S-adenosyl-L-methionine biosynthesis; S-adenosyl-L-methionine from L-methionine: step 1/1. Its function is as follows. Catalyzes the formation of S-adenosylmethionine (AdoMet) from methionine and ATP. The overall synthetic reaction is composed of two sequential steps, AdoMet formation and the subsequent tripolyphosphate hydrolysis which occurs prior to release of AdoMet from the enzyme. The sequence is that of S-adenosylmethionine synthase from Thermotoga maritima (strain ATCC 43589 / DSM 3109 / JCM 10099 / NBRC 100826 / MSB8).